The following is a 388-amino-acid chain: Staphopain A (388 aa).

The N-terminal stretch at 1-25 (MKRNFPKLIALSLILSLSVTPIANA) is a signal peptide. The propeptide occupies 26–214 (ESNSNIKAKD…TSQFKSNNYT (189 aa)). Active-site residues include Cys238, His334, and Asn355.

The protein belongs to the peptidase C47 family. In terms of assembly, in the cytoplasm, prematurely activated/folded ScpA forms a stable non-covalent complex with ScpB. In terms of processing, cleavage leads to the activation of ScpA probably by an auto-catalytic manner.

Its subcellular location is the secreted. It carries out the reaction Broad endopeptidase action on proteins including elastin, but rather limited hydrolysis of small-molecule substrates. Assays are conveniently made with hemoglobin, casein or Z-Phe-Arg-NHMec as substrate.. Prematurely activated/folded staphopain A is inhibited by staphostatin A (ScpB), which is probably required to protect staphylococcal cytoplasmic proteins from degradation by ScpA. Functionally, cysteine protease that plays an important role in the inhibition of host innate immune response. Cleaves host elastins found in connective tissues, pulmonary surfactant protein A in the lungs, and the chemokine receptor CXCR2 on leukocytes. Proteolytic cleavage of surfactant protein A impairs bacterial phagocytosis by neutrophils while CXCR2 degradation blocks neutrophil activation and chemotaxis. Additionally, promotes vascular leakage by activating the plasma kallikerin/kinin system, resulting in hypotension. The sequence is that of Staphopain A (sspP) from Staphylococcus aureus (strain MSSA476).